We begin with the raw amino-acid sequence, 942 residues long: Mitogen-activated protein kinase kinase kinase 14 (942 aa).

The span at 136–152 (GKRHGKARKKRRKKRSK) shows a compositional bias: basic residues. 2 disordered regions span residues 136–156 (GKRH…SLAQ) and 291–326 (VSGQ…SCPS). Residues 402–657 (MTHQPRVGRG…ELRRKVGKAL (256 aa)) enclose the Protein kinase domain. The tract at residues 403 to 655 (THQPRVGRGS…AMELRRKVGK (253 aa)) is interaction with ZFP91. Residues 408–416 (VGRGSFGEV) and K431 each bind ATP. D517 serves as the catalytic Proton acceptor. T561 is subject to Phosphothreonine. Disordered stretches follow at residues 660–756 (VGGL…FPDR) and 801–823 (SDDS…SSGV). The segment covering 707–720 (EPQPPLPPEPPEPS) has biased composition (pro residues). Over residues 809-823 (SKASQSSRDTLSSGV) the composition is skewed to polar residues.

Belongs to the protein kinase superfamily. STE Ser/Thr protein kinase family. MAP kinase kinase kinase subfamily. Interacts with TRAF2, TRAF3, TRAF5, TRAF6, IKKA and NF-kappa-B2/P100. Interacts with PELI3. Interacts with NIBP; the interaction is direct. Interacts with ARRB1 and ARRB2. Interacts with GRB10. Interacts with ZFP91. Interacts with NLRP12; this interaction promotes proteasomal degradation of MAP3K14. Directly interacts with DDX3X. Interacts (via C-terminus and kinase domain) with PPPC3A (via N-terminus) and PPP3CB. Post-translationally, phosphorylation at Thr-561 is required to activate its kinase activity and 'Lys-63'-linked polyubiquitination. Phosphorylated by CHUK/IKKA leading to MAP3K14 destabilization. Autophosphorylated. Ubiquitinated. Undergoes both 'Lys-48'- and 'Lys-63'-linked polyubiquitination. 'Lys-48'-linked polyubiquitination leads to its degradation by the proteasome, while 'Lys-63'-linked polyubiquitination stabilizes and activates it.

The protein resides in the cytoplasm. It carries out the reaction L-seryl-[protein] + ATP = O-phospho-L-seryl-[protein] + ADP + H(+). The enzyme catalyses L-threonyl-[protein] + ATP = O-phospho-L-threonyl-[protein] + ADP + H(+). Functionally, lymphotoxin beta-activated kinase which seems to be exclusively involved in the activation of NF-kappa-B and its transcriptional activity. Phosphorylates CHUK/IKKA. Promotes proteolytic processing of NFKB2/P100, which leads to activation of NF-kappa-B via the non-canonical pathway. Has an essential role in the non-canonical NF-kappa-B signalining that regulates genes encoding molecules involved in B-cell survival, lymphoid organogenesis, and immune response. Could act in a receptor-selective manner. The chain is Mitogen-activated protein kinase kinase kinase 14 from Mus musculus (Mouse).